The following is a 198-amino-acid chain: Ribonuclease HII (198 aa).

The region spanning 1–198 is the RNase H type-2 domain; sequence MLCGIDEAGR…QRRSFFVKNL (198 aa). Asp6, Glu7, and Asp112 together coordinate a divalent metal cation.

It belongs to the RNase HII family. Mn(2+) serves as cofactor. It depends on Mg(2+) as a cofactor.

Its subcellular location is the cytoplasm. It catalyses the reaction Endonucleolytic cleavage to 5'-phosphomonoester.. Endonuclease that specifically degrades the RNA of RNA-DNA hybrids. The protein is Ribonuclease HII of Treponema denticola (strain ATCC 35405 / DSM 14222 / CIP 103919 / JCM 8153 / KCTC 15104).